The primary structure comprises 775 residues: Acetamidase regulatory protein (775 aa).

Residues M1–G15 show a composition bias toward polar residues. The interval M1–K20 is disordered. Residues C26–H59 constitute a DNA-binding region (zn(2)-C6 fungal-type). The segment covering P126–R153 has biased composition (polar residues). Disordered regions lie at residues P126–R159 and A630–Q699. Positions A630 to N644 are enriched in basic and acidic residues. Positions P674 to P689 are enriched in pro residues.

It is found in the nucleus. In terms of biological role, positively regulates the expression of genes involved in the catabolism of certain amides, omega amino acids, and lactams. In Aspergillus oryzae (strain ATCC 42149 / RIB 40) (Yellow koji mold), this protein is Acetamidase regulatory protein (amdR).